The following is a 557-amino-acid chain: Protein NRT1/ PTR FAMILY 5.14 (557 aa).

A run of 2 helical transmembrane segments spans residues 35–55 (AALFIIGVEVAERFAYYGIGS) and 78–98 (AWSGIATLLPVLGAFVADAFL). T103 is modified (phosphothreonine). Transmembrane regions (helical) follow at residues 104–124 (IIISSLIYVLGLAFLTLSAFL), 133–153 (SSTSSFLNVLFFFSLYLVAIG), 183–203 (FFNWWYLSLSAGICFAILVVV), 209–229 (FSWAFGFGIPCVFMVISLVLF), 320–340 (IPVWFTTLAYAIPYAQYMTFF), 357–377 (IPPASLQVFIGISIVLFVPIY), 401–421 (IGTGIVLSTITMVIAALVEFK), 443–463 (IWWLIPQYLLLGLADVYTLVG), 479–499 (IGLALYLSALGVGSLLSSLLI), and 526–546 (YFYWLLAIVSAVGFFTFLFIS).

The protein belongs to the major facilitator superfamily. Proton-dependent oligopeptide transporter (POT/PTR) (TC 2.A.17) family. In terms of tissue distribution, expressed in roots.

Its subcellular location is the membrane. The polypeptide is Protein NRT1/ PTR FAMILY 5.14 (NPF5.14) (Arabidopsis thaliana (Mouse-ear cress)).